Consider the following 442-residue polypeptide: MSDSTQFSLFDSGDDEPAKVTAPKRKVARKKRSSSSSDDAISISELTRQIKSTVESGFPGVWVAGEITDIARPRSGHLYFTLKDERSQIRGVMWRSVAERLPFELDDGQSVLCMGDVEVYAARGSYQLVVRKCQPQGMGALQLAFAQLQAKLQAEGLFEPERKRLLPRVPRRVAIVTSPTGAAIQDFLQAAAQRHAGIEIVLIPASVQGPGSVESLIDGMRAAHRMRPQPDVLIVSRGGGSLEDLWSFNDEQLVRAIAASRIPTVSAVGHEIDVTLADLVADVRALTPTDAASRVLPDRDSMVAALDALGQMMATNLFRRVHSERQRLENWESRPVFQNPFEMVHDRSREVDDWDERGRSAIWRRLEQAQAKLATVAAAQSALSPLAVLARGYSVTQTDAGKVVRSTGDVQPGDSLRTRLTDGDVISVVSRHESKPGNSDSA.

The interval 1 to 38 (MSDSTQFSLFDSGDDEPAKVTAPKRKVARKKRSSSSSD) is disordered. Over residues 22–33 (APKRKVARKKRS) the composition is skewed to basic residues.

This sequence belongs to the XseA family. Heterooligomer composed of large and small subunits.

Its subcellular location is the cytoplasm. It carries out the reaction Exonucleolytic cleavage in either 5'- to 3'- or 3'- to 5'-direction to yield nucleoside 5'-phosphates.. Functionally, bidirectionally degrades single-stranded DNA into large acid-insoluble oligonucleotides, which are then degraded further into small acid-soluble oligonucleotides. The chain is Exodeoxyribonuclease 7 large subunit from Rhodopirellula baltica (strain DSM 10527 / NCIMB 13988 / SH1).